Here is a 316-residue protein sequence, read N- to C-terminus: 4-hydroxy-3-methylbut-2-enyl diphosphate reductase (316 aa).

Cys-12 is a binding site for [4Fe-4S] cluster. Residues His-41 and His-74 each contribute to the (2E)-4-hydroxy-3-methylbut-2-enyl diphosphate site. 2 residues coordinate dimethylallyl diphosphate: His-41 and His-74. Isopentenyl diphosphate is bound by residues His-41 and His-74. Residue Cys-96 coordinates [4Fe-4S] cluster. A (2E)-4-hydroxy-3-methylbut-2-enyl diphosphate-binding site is contributed by His-124. His-124 is a dimethylallyl diphosphate binding site. Residue His-124 coordinates isopentenyl diphosphate. Catalysis depends on Glu-126, which acts as the Proton donor. Thr-167 contributes to the (2E)-4-hydroxy-3-methylbut-2-enyl diphosphate binding site. Cys-197 contributes to the [4Fe-4S] cluster binding site. Positions 225, 226, 227, and 269 each coordinate (2E)-4-hydroxy-3-methylbut-2-enyl diphosphate. Residues Ser-225, Ser-226, Asn-227, and Ser-269 each contribute to the dimethylallyl diphosphate site. 4 residues coordinate isopentenyl diphosphate: Ser-225, Ser-226, Asn-227, and Ser-269.

Belongs to the IspH family. In terms of assembly, homodimer. Requires [4Fe-4S] cluster as cofactor.

It carries out the reaction isopentenyl diphosphate + 2 oxidized [2Fe-2S]-[ferredoxin] + H2O = (2E)-4-hydroxy-3-methylbut-2-enyl diphosphate + 2 reduced [2Fe-2S]-[ferredoxin] + 2 H(+). The catalysed reaction is dimethylallyl diphosphate + 2 oxidized [2Fe-2S]-[ferredoxin] + H2O = (2E)-4-hydroxy-3-methylbut-2-enyl diphosphate + 2 reduced [2Fe-2S]-[ferredoxin] + 2 H(+). Its pathway is isoprenoid biosynthesis; dimethylallyl diphosphate biosynthesis; dimethylallyl diphosphate from (2E)-4-hydroxy-3-methylbutenyl diphosphate: step 1/1. It participates in isoprenoid biosynthesis; isopentenyl diphosphate biosynthesis via DXP pathway; isopentenyl diphosphate from 1-deoxy-D-xylulose 5-phosphate: step 6/6. Functionally, catalyzes the conversion of 1-hydroxy-2-methyl-2-(E)-butenyl 4-diphosphate (HMBPP) into a mixture of isopentenyl diphosphate (IPP) and dimethylallyl diphosphate (DMAPP). Acts in the terminal step of the DOXP/MEP pathway for isoprenoid precursor biosynthesis. This chain is 4-hydroxy-3-methylbut-2-enyl diphosphate reductase, found in Shigella flexneri serotype 5b (strain 8401).